The sequence spans 212 residues: Nitrogen regulatory protein P-II homolog (212 aa).

Composition is skewed to low complexity over residues methionine 1 to alanine 12, threonine 32 to arginine 46, and proline 63 to alanine 74. The N-terminal 68 residues, methionine 1–arginine 68, are a transit peptide targeting the chloroplast. The segment at methionine 1–alanine 74 is disordered. ATP contacts are provided by residues glycine 117–glutamine 121 and glycine 170–lysine 173. A Mg(2+)-binding site is contributed by glycine 119.

Belongs to the P(II) protein family. Homodimer.

Its subcellular location is the plastid. The protein resides in the chloroplast. Its function is as follows. Participates in sensing carbon and organic nitrogen status and regulates some steps of primary carbon and nitrogen metabolism. In Oryza sativa subsp. japonica (Rice), this protein is Nitrogen regulatory protein P-II homolog (GLB).